The sequence spans 333 residues: 1,5-anhydro-D-fructose reductase (333 aa).

Residues 9 to 12 (ASTI), 33 to 34 (ST), Arg-38, 71 to 76 (TTNELH), 93 to 94 (EK), Asn-120, 162 to 163 (WR), and Tyr-283 contribute to the NADP(+) site.

In terms of assembly, monomer.

It catalyses the reaction 1,5-anhydro-D-mannitol + NADP(+) = 1,5-anhydro-D-fructose + NADPH + H(+). Catalyzes the NADPH-specific reduction of 1,5-anhydro-D-fructose to 1,5-anhydro-D-mannitol. Also shows some activity against structurally related compounds such as 3-keto-1,5-anhydro-D-fructose, D-glucosone and D-xylosone. The enzyme cannot use NADH as cosubstrate. The sequence is that of 1,5-anhydro-D-fructose reductase (afr) from Ensifer adhaerens (Sinorhizobium morelense).